The following is a 388-amino-acid chain: Chorismate synthase (388 aa).

NADP(+)-binding residues include Arg39 and Arg45. FMN-binding positions include 130–132, 251–252, Gly296, 311–315, and Arg337; these read RSS, NA, and KPIPT.

It belongs to the chorismate synthase family. As to quaternary structure, homotetramer. Requires FMNH2 as cofactor.

It catalyses the reaction 5-O-(1-carboxyvinyl)-3-phosphoshikimate = chorismate + phosphate. Its pathway is metabolic intermediate biosynthesis; chorismate biosynthesis; chorismate from D-erythrose 4-phosphate and phosphoenolpyruvate: step 7/7. Functionally, catalyzes the anti-1,4-elimination of the C-3 phosphate and the C-6 proR hydrogen from 5-enolpyruvylshikimate-3-phosphate (EPSP) to yield chorismate, which is the branch point compound that serves as the starting substrate for the three terminal pathways of aromatic amino acid biosynthesis. This reaction introduces a second double bond into the aromatic ring system. The chain is Chorismate synthase from Streptococcus sanguinis (strain SK36).